We begin with the raw amino-acid sequence, 362 residues long: 3-dehydroquinate synthase (362 aa).

This sequence belongs to the archaeal-type DHQ synthase family.

The catalysed reaction is 2-amino-2,3,7-trideoxy-D-lyxo-hept-6-ulosonate + NAD(+) + H2O = 3-dehydroquinate + NH4(+) + NADH + H(+). Functionally, catalyzes the oxidative deamination and cyclization of 2-amino-3,7-dideoxy-D-threo-hept-6-ulosonic acid (ADH) to yield 3-dehydroquinate (DHQ), which is fed into the canonical shikimic pathway of aromatic amino acid biosynthesis. The polypeptide is 3-dehydroquinate synthase (Methanothrix thermoacetophila (strain DSM 6194 / JCM 14653 / NBRC 101360 / PT) (Methanosaeta thermophila)).